Reading from the N-terminus, the 674-residue chain is Pentatricopeptide repeat-containing protein At4g17616 (674 aa).

5 PPR repeats span residues 409-443, 444-478, 519-553, 554-584, and 593-627; these read GSRL…GYPM, ELAT…GLIT, MLYE…KIPP, TVQS…IKRN, and TQDL…DMYN.

This sequence belongs to the PPR family. P subfamily.

This Arabidopsis thaliana (Mouse-ear cress) protein is Pentatricopeptide repeat-containing protein At4g17616.